The primary structure comprises 159 residues: Ribosome maturation factor RimM (159 aa).

Residues 86 to 159 (SDAFHLPKLI…IHIETIEGLI (74 aa)) enclose the PRC barrel domain.

It belongs to the RimM family. Binds ribosomal protein uS19.

The protein resides in the cytoplasm. Its function is as follows. An accessory protein needed during the final step in the assembly of 30S ribosomal subunit, possibly for assembly of the head region. Essential for efficient processing of 16S rRNA. May be needed both before and after RbfA during the maturation of 16S rRNA. It has affinity for free ribosomal 30S subunits but not for 70S ribosomes. This Acholeplasma laidlawii (strain PG-8A) protein is Ribosome maturation factor RimM.